Reading from the N-terminus, the 380-residue chain is Protein FAM110B (380 aa).

The interval 92-272 (ALGSPTLKGF…RPSLQRSKSD (181 aa)) is disordered. Positions 100 to 110 (GFGGGGGGAKS) are enriched in gly residues. Over residues 127–138 (ILNSSEGSSTGS) the composition is skewed to polar residues. The segment covering 153–162 (DAAELHRHSF) has biased composition (basic and acidic residues). Residues 239-248 (KVAAPAAVKS) show a composition bias toward low complexity. Phosphoserine is present on residues Ser-248 and Ser-311. The disordered stretch occupies residues 327–347 (DCEQSQDSNSDLRNDDSANDR). Basic and acidic residues predominate over residues 336 to 345 (SDLRNDDSAN).

Belongs to the FAM110 family.

The protein localises to the cytoplasm. It localises to the cytoskeleton. Its subcellular location is the microtubule organizing center. It is found in the centrosome. The protein is Protein FAM110B (FAM110B) of Bos taurus (Bovine).